A 103-amino-acid polypeptide reads, in one-letter code: Large ribosomal subunit protein bL21 (103 aa).

The protein belongs to the bacterial ribosomal protein bL21 family. As to quaternary structure, part of the 50S ribosomal subunit. Contacts protein L20.

Functionally, this protein binds to 23S rRNA in the presence of protein L20. This chain is Large ribosomal subunit protein bL21, found in Enterobacter sp. (strain 638).